Reading from the N-terminus, the 122-residue chain is Small ribosomal subunit protein uS13 (122 aa).

A disordered region spans residues 95-122; sequence GLPVRGQRTHTNARTRKGPRRGTVGKKK.

The protein belongs to the universal ribosomal protein uS13 family. Part of the 30S ribosomal subunit. Forms a loose heterodimer with protein S19. Forms two bridges to the 50S subunit in the 70S ribosome.

Located at the top of the head of the 30S subunit, it contacts several helices of the 16S rRNA. In the 70S ribosome it contacts the 23S rRNA (bridge B1a) and protein L5 of the 50S subunit (bridge B1b), connecting the 2 subunits; these bridges are implicated in subunit movement. Contacts the tRNAs in the A and P-sites. The sequence is that of Small ribosomal subunit protein uS13 from Nitratidesulfovibrio vulgaris (strain ATCC 29579 / DSM 644 / CCUG 34227 / NCIMB 8303 / VKM B-1760 / Hildenborough) (Desulfovibrio vulgaris).